A 330-amino-acid chain; its full sequence is DNA-directed RNA polymerase subunit alpha (330 aa).

Positions 1-231 are alpha N-terminal domain (alpha-NTD); that stretch reads MALFNFQKPD…IHHFMLFSDE (231 aa). Residues 253–330 form an alpha C-terminal domain (alpha-CTD) region; it reads MRQLLKTKLV…DLAKYKLDKE (78 aa).

Belongs to the RNA polymerase alpha chain family. Homodimer. The RNAP catalytic core consists of 2 alpha, 1 beta, 1 beta' and 1 omega subunit. When a sigma factor is associated with the core the holoenzyme is formed, which can initiate transcription.

It catalyses the reaction RNA(n) + a ribonucleoside 5'-triphosphate = RNA(n+1) + diphosphate. Functionally, DNA-dependent RNA polymerase catalyzes the transcription of DNA into RNA using the four ribonucleoside triphosphates as substrates. The sequence is that of DNA-directed RNA polymerase subunit alpha from Flavobacterium psychrophilum (strain ATCC 49511 / DSM 21280 / CIP 103535 / JIP02/86).